The sequence spans 114 residues: Large ribosomal subunit protein uL22 (114 aa).

The protein belongs to the universal ribosomal protein uL22 family. In terms of assembly, part of the 50S ribosomal subunit.

This protein binds specifically to 23S rRNA; its binding is stimulated by other ribosomal proteins, e.g. L4, L17, and L20. It is important during the early stages of 50S assembly. It makes multiple contacts with different domains of the 23S rRNA in the assembled 50S subunit and ribosome. Functionally, the globular domain of the protein is located near the polypeptide exit tunnel on the outside of the subunit, while an extended beta-hairpin is found that lines the wall of the exit tunnel in the center of the 70S ribosome. In Streptococcus thermophilus (strain CNRZ 1066), this protein is Large ribosomal subunit protein uL22.